We begin with the raw amino-acid sequence, 1142 residues long: Melanoma-associated antigen C1 (1142 aa).

The interval 1 to 132 is disordered; that stretch reads MGDKDMPTAG…DVQSPLQNPA (132 aa). Low complexity predominate over residues 13 to 42; the sequence is SLLQSSSESPQSCPEGEDSQSPLQIPQSSP. S63 is subject to Phosphoserine. Residues 76–87 are compositionally biased toward low complexity; that stretch reads SQSPLQIPQSSP. The span at 92–103 shows a compositional bias: polar residues; sequence TQSPLQNSQSSP. S207 and S382 each carry phosphoserine. 2 disordered regions span residues 502–778 and 791–893; these read TQST…LQRP and LQSS…SLTD. The span at 614–626 shows a compositional bias: polar residues; it reads SPLQGEEFQSSLQ. The segment covering 627-659 has biased composition (low complexity); the sequence is SPVSICSSSTPSSLPQSFPESSQSPPEGPVQSP. A compositionally biased stretch (polar residues) spans 671-680; that stretch reads HSQSPLQSPE. Composition is skewed to low complexity over residues 741–762 and 807–889; these read QSPVSICSSSTSLSLPQSFPES and QSPL…LESD. The MAGE domain occupies 908 to 1106; sequence LDEKVDELAR…ITFPSSYKDA (199 aa). The residue at position 1063 (S1063) is a Phosphoserine. A disordered region spans residues 1118-1142; sequence IDTTDDSTATESASSSVMSPSFSSE. The segment covering 1123-1142 has biased composition (low complexity); that stretch reads DSTATESASSSVMSPSFSSE.

In terms of tissue distribution, expressed in testis and in tumors of a wide variety of histologic types.

The protein localises to the cytoplasm. This chain is Melanoma-associated antigen C1 (MAGEC1), found in Homo sapiens (Human).